Reading from the N-terminus, the 349-residue chain is Hypoxia-inducible factor 1-alpha inhibitor (349 aa).

Residues 1–10 (MAATAAEAVA) show a composition bias toward low complexity. Residues 1–51 (MAATAAEAVASGSGEPREEAGALGPAWDESQLRSYSFPTRPIPRLSQSDPR) form a disordered region. The residue at position 2 (Ala2) is an N-acetylalanine. The tract at residues 2–125 (AATAAEAVAS…PRSNREEMKF (124 aa)) is interaction with VHL. Residues 142–312 (ERLYLQQTLN…PKRIEYPLKA (171 aa)) enclose the JmjC domain. Tyr145 contacts 2-oxoglutarate. Residues Asp152 and 181–183 (QLT) each bind substrate. Thr196 is a binding site for 2-oxoglutarate. Residues His199 and Asp201 each coordinate Fe cation. Residue 201-203 (DEQ) participates in substrate binding. Residues Asn205 and Lys214 each coordinate 2-oxoglutarate. 238 to 239 (RQ) provides a ligand contact to substrate. Fe cation is bound at residue His279. Asn294 provides a ligand contact to 2-oxoglutarate. 2 residues coordinate substrate: Ala300 and Asn321.

Homodimer; homodimerization is essential for catalytic activity. Interacts with VHL and HIF1A. Part of a complex with VHL, HIF1A and HDAC1 or HDAC2 or HDAC3. Interacts with NFKB1 and NFKBIA. Interacts with NOTCH1, NOTCH2 and NOTCH3 but not with NOTCH4. Interacts with APBA3; binding inhibits HIF1AN binding to HIF1A. Interacts with TNKS2. Interacts with PPP1R12A. Interacts with ASB4. Interacts with UBE3A. Interacts with ANKS3. Interacts with NECAB3; the interaction is indirect and seems to be mediated by APBA3. Requires Fe(2+) as cofactor.

Its subcellular location is the nucleus. It localises to the cytoplasm. It is found in the perinuclear region. It catalyses the reaction L-asparaginyl-[hypoxia-inducible factor alpha subunit] + 2-oxoglutarate + O2 = (3S)-3-hydroxy-L-asparaginyl-[hypoxia-inducible factor alpha subunit] + succinate + CO2. The catalysed reaction is L-histidyl-[ankyrin-repeat domain protein] + 2-oxoglutarate + O2 = (3S)-3-hydroxy-L-histidyl-[ankyrin-repeat domain protein] + succinate + CO2. The enzyme catalyses L-asparaginyl-[ankyrin-repeat domain protein] + 2-oxoglutarate + O2 = (3S)-3-hydroxy-L-asparaginyl-[ankyrin-repeat domain protein] + succinate + CO2. It carries out the reaction L-aspartyl-[ankyrin-repeat domain protein] + 2-oxoglutarate + O2 = (3S)-3-hydroxy-L-aspartyl-[ankyrin-repeat domain protein] + succinate + CO2. Hydroxylates HIF-1 alpha at 'Asn-803' in the C-terminal transactivation domain (CAD). Functions as an oxygen sensor and, under normoxic conditions, the hydroxylation prevents interaction of HIF-1 with transcriptional coactivators including Cbp/p300-interacting transactivator. Involved in transcriptional repression through interaction with HIF1A, VHL and histone deacetylases. Hydroxylates specific Asn residues within ankyrin repeat domains (ARD) of NFKB1, NFKBIA, NOTCH1, ASB4, PPP1R12A and several other ARD-containing proteins. Also hydroxylates Asp and His residues within ARDs of ANK1 and TNKS2, respectively. Negatively regulates NOTCH1 activity, accelerating myogenic differentiation. Positively regulates ASB4 activity, promoting vascular differentiation. The chain is Hypoxia-inducible factor 1-alpha inhibitor (HIF1AN) from Homo sapiens (Human).